We begin with the raw amino-acid sequence, 492 residues long: Adenosylhomocysteinase (492 aa).

Substrate contacts are provided by T68, D153, and E215. Residue 216–218 (TTT) coordinates NAD(+). Substrate is bound by residues K245 and D249. NAD(+) contacts are provided by residues N250, 279-284 (GYGDVG), E302, N337, 358-360 (IGH), and N406.

The protein belongs to the adenosylhomocysteinase family. The cofactor is NAD(+).

The protein localises to the cytoplasm. The catalysed reaction is S-adenosyl-L-homocysteine + H2O = L-homocysteine + adenosine. It participates in amino-acid biosynthesis; L-homocysteine biosynthesis; L-homocysteine from S-adenosyl-L-homocysteine: step 1/1. May play a key role in the regulation of the intracellular concentration of adenosylhomocysteine. This is Adenosylhomocysteinase from Mycobacterium marinum (strain ATCC BAA-535 / M).